Here is a 493-residue protein sequence, read N- to C-terminus: 6-aminohexanoate-cyclic-dimer hydrolase (493 aa).

Catalysis depends on charge relay system residues Lys-72 and Ser-150. The Acyl-ester intermediate role is filled by Ser-174.

The protein belongs to the amidase family. In terms of assembly, homodimer.

It catalyses the reaction 1,8-diazacyclotetradecane-2,9-dione + H2O = N-(6-aminohexanoyl)-6-aminohexanoate. It participates in xenobiotic degradation; nylon-6 oligomer degradation. Its activity is regulated as follows. Strongly inhibited by 1 uM diisopropylphosphofluoridate and 10 uM p-chloromercuribenzoate but scarcely inhibited by 100 mM EDTA in vitro. Functionally, specifically catalyzes the hydrolysis of 6-aminohexanoic acid cyclic dimer (1,8-diazacyclotetradecane-2,9-dione) to form the linear dimer 6-aminohexanoyl-6-aminohexanoic acid. Is inactive on 6-aminohexanoic acid oligomers (degree of polymerization 2 to 6), various other cyclic amides, cyclic diamides, linear amides, oligopeptides, and casein. Allows the bacterium to grow on a medium containing 6-aminohexanoic acid cyclic dimer as the sole carbon and nitrogen sources. In Paenarthrobacter ureafaciens, this protein is 6-aminohexanoate-cyclic-dimer hydrolase (nylA).